A 500-amino-acid chain; its full sequence is Na(+)/H(+) antiporter NhaB (500 aa).

A run of 12 helical transmembrane segments spans residues 28–50 (FLLS…VLVG), 68–88 (GGLL…ALYA), 98–118 (LLLM…LLLF), 121–141 (LLLG…LAAL), 145–165 (FLDA…FFAV), 205–225 (LLMH…VGEP), 244–264 (QVAP…VALE), 301–318 (ALLV…GLAL), 350–370 (FQEA…VAVI), 394–414 (MLFI…VATI), 449–469 (VATP…IAPL), and 477–497 (MVWM…WAVS).

This sequence belongs to the NhaB Na(+)/H(+) (TC 2.A.34) antiporter family.

The protein localises to the cell inner membrane. It catalyses the reaction 2 Na(+)(in) + 3 H(+)(out) = 2 Na(+)(out) + 3 H(+)(in). Its function is as follows. Na(+)/H(+) antiporter that extrudes sodium in exchange for external protons. The protein is Na(+)/H(+) antiporter NhaB of Pseudomonas paraeruginosa (strain DSM 24068 / PA7) (Pseudomonas aeruginosa (strain PA7)).